Reading from the N-terminus, the 590-residue chain is Aspartate--tRNA(Asp/Asn) ligase (590 aa).

L-aspartate is bound at residue glutamate 176. The segment at 200–203 (QLFK) is aspartate. L-aspartate contacts are provided by arginine 222 and histidine 451. 222 to 224 (RDE) is a binding site for ATP. Glutamate 485 contributes to the ATP binding site. Arginine 492 is an L-aspartate binding site. An ATP-binding site is contributed by 537 to 540 (GIDR).

It belongs to the class-II aminoacyl-tRNA synthetase family. Type 1 subfamily. As to quaternary structure, homodimer.

The protein localises to the cytoplasm. The catalysed reaction is tRNA(Asx) + L-aspartate + ATP = L-aspartyl-tRNA(Asx) + AMP + diphosphate. Its function is as follows. Aspartyl-tRNA synthetase with relaxed tRNA specificity since it is able to aspartylate not only its cognate tRNA(Asp) but also tRNA(Asn). Reaction proceeds in two steps: L-aspartate is first activated by ATP to form Asp-AMP and then transferred to the acceptor end of tRNA(Asp/Asn). The polypeptide is Aspartate--tRNA(Asp/Asn) ligase (Ehrlichia chaffeensis (strain ATCC CRL-10679 / Arkansas)).